A 339-amino-acid chain; its full sequence is Phosphoribosylformylglycinamidine cyclo-ligase (339 aa).

This sequence belongs to the AIR synthase family.

The protein localises to the cytoplasm. It catalyses the reaction 2-formamido-N(1)-(5-O-phospho-beta-D-ribosyl)acetamidine + ATP = 5-amino-1-(5-phospho-beta-D-ribosyl)imidazole + ADP + phosphate + H(+). Its pathway is purine metabolism; IMP biosynthesis via de novo pathway; 5-amino-1-(5-phospho-D-ribosyl)imidazole from N(2)-formyl-N(1)-(5-phospho-D-ribosyl)glycinamide: step 2/2. The chain is Phosphoribosylformylglycinamidine cyclo-ligase from Oceanobacillus iheyensis (strain DSM 14371 / CIP 107618 / JCM 11309 / KCTC 3954 / HTE831).